The sequence spans 63 residues: uncharacterized protein (63 aa).

A helical membrane pass occupies residues 20–40 (IVLLISFIFFFGRFIYSSVGA).

The protein resides in the membrane. This is an uncharacterized protein from Escherichia coli O157:H7.